Consider the following 470-residue polypeptide: 6-phospho-beta-galactosidase (470 aa).

D-galactose 6-phosphate-binding residues include Gln-19, His-116, Asn-159, Glu-160, and Asn-297. Residue Glu-160 is the Proton donor of the active site. The active-site Nucleophile is the Glu-375. Residues Ser-430, Trp-431, Lys-437, and Tyr-439 each coordinate D-galactose 6-phosphate.

The protein belongs to the glycosyl hydrolase 1 family.

It catalyses the reaction a 6-phospho-beta-D-galactoside + H2O = D-galactose 6-phosphate + an alcohol. Its pathway is carbohydrate metabolism; lactose degradation; D-galactose 6-phosphate and beta-D-glucose from lactose 6-phosphate: step 1/1. In Staphylococcus aureus (strain Mu3 / ATCC 700698), this protein is 6-phospho-beta-galactosidase.